The chain runs to 427 residues: Serine--tRNA ligase (427 aa).

Position 228 to 230 (228 to 230 (TSE)) interacts with L-serine. ATP is bound at residue 259 to 261 (RSE). Glu282 is a binding site for L-serine. 346-349 (EISS) provides a ligand contact to ATP. An L-serine-binding site is contributed by Ser384.

Belongs to the class-II aminoacyl-tRNA synthetase family. Type-1 seryl-tRNA synthetase subfamily. Homodimer. The tRNA molecule binds across the dimer.

It localises to the cytoplasm. It carries out the reaction tRNA(Ser) + L-serine + ATP = L-seryl-tRNA(Ser) + AMP + diphosphate + H(+). The enzyme catalyses tRNA(Sec) + L-serine + ATP = L-seryl-tRNA(Sec) + AMP + diphosphate + H(+). The protein operates within aminoacyl-tRNA biosynthesis; selenocysteinyl-tRNA(Sec) biosynthesis; L-seryl-tRNA(Sec) from L-serine and tRNA(Sec): step 1/1. Functionally, catalyzes the attachment of serine to tRNA(Ser). Is also able to aminoacylate tRNA(Sec) with serine, to form the misacylated tRNA L-seryl-tRNA(Sec), which will be further converted into selenocysteinyl-tRNA(Sec). This chain is Serine--tRNA ligase, found in Ehrlichia ruminantium (strain Welgevonden).